A 260-amino-acid polypeptide reads, in one-letter code: Ribose-5-phosphate isomerase (260 aa).

It belongs to the ribose 5-phosphate isomerase family.

It localises to the cytoplasm. It catalyses the reaction aldehydo-D-ribose 5-phosphate = D-ribulose 5-phosphate. The protein operates within carbohydrate degradation; pentose phosphate pathway; D-ribose 5-phosphate from D-ribulose 5-phosphate (non-oxidative stage): step 1/1. This is Ribose-5-phosphate isomerase (RKI1) from Candida glabrata (strain ATCC 2001 / BCRC 20586 / JCM 3761 / NBRC 0622 / NRRL Y-65 / CBS 138) (Yeast).